A 370-amino-acid chain; its full sequence is Histidinol-phosphate aminotransferase 1 (370 aa).

At K222 the chain carries N6-(pyridoxal phosphate)lysine.

The protein belongs to the class-II pyridoxal-phosphate-dependent aminotransferase family. Histidinol-phosphate aminotransferase subfamily. Homodimer. It depends on pyridoxal 5'-phosphate as a cofactor.

It carries out the reaction L-histidinol phosphate + 2-oxoglutarate = 3-(imidazol-4-yl)-2-oxopropyl phosphate + L-glutamate. It participates in amino-acid biosynthesis; L-histidine biosynthesis; L-histidine from 5-phospho-alpha-D-ribose 1-diphosphate: step 7/9. The polypeptide is Histidinol-phosphate aminotransferase 1 (Bacillus thuringiensis subsp. konkukian (strain 97-27)).